The sequence spans 980 residues: Ovochymase-2 (980 aa).

The first 21 residues, 1–21 (MAETSVFSIMMLTVMTAVGRG), serve as a signal peptide directing secretion. Residues 22–49 (ATDRPGRVSRCGERPSANASVTYNLLSR) constitute a propeptide, activation peptide. Asn39 carries an N-linked (GlcNAc...) asparagine glycan. Residues 50-299 (IVGGTSAVKG…LLNWLSANLN (250 aa)) form the Peptidase S1 1 domain. A disulfide bond links Cys75 and Cys91. His90 serves as the catalytic Charge relay system. Residues Val112 and Glu117 each coordinate Ca(2+). Catalysis depends on Asp140, which acts as the Charge relay system. 11 cysteine pairs are disulfide-bonded: Cys174-Cys244, Cys205-Cys223, Cys234-Cys263, Cys312-Cys342, Cys369-Cys388, Cys435-Cys462, Cys489-Cys510, Cys618-Cys634, Cys716-Cys779, Cys744-Cys757, and Cys769-Cys798. Ser238 acts as the Charge relay system in catalysis. 2 CUB domains span residues 312 to 425 (CSTN…YQAV) and 435 to 547 (CGSV…ISFV). In terms of domain architecture, Peptidase S1 2 spans 593–822 (IIKAEEAMPN…FIPWIMETIL (230 aa)). The propeptide at 593–980 (IIKAEEAMPN…WLSYSFHNQN (388 aa)) is activation peptide. Asn766 carries an N-linked (GlcNAc...) asparagine glycan. A disordered region spans residues 835–863 (HHPLIPPDKLSQEKALLPDSPPSNDSSSS). N-linked (GlcNAc...) asparagine glycans are attached at residues Asn858 and Asn932.

Belongs to the peptidase S1 family. Post-translationally, the catalytically inactive 108 kDa form is processed both N- and C-terminally to give rise to catalytically active and inactive forms. Differentially expressed in the oviductal pars recta (PR) region.

The protein resides in the secreted. The catalysed reaction is Preferential cleavage at 371-Gly-Ser-Arg-|-Trp-374 of glycoprotein gp43 in Xenopus laevis coelemic egg envelope to yield gp41.. Functionally, mediates gamete interaction by affecting the vitelline coat. This Rhinella arenarum (Argentine common toad) protein is Ovochymase-2 (OVCH2).